An 843-amino-acid chain; its full sequence is Translation initiation factor IF-2 (843 aa).

Positions 198–219 (YKREEEEKKSKAKKAGGKGFKK) are disordered. Residues 207–219 (SKAKKAGGKGFKK) are compositionally biased toward basic residues. A tr-type G domain is found at 345–512 (SRAPVVTIMG…AVLLQSEVLE (168 aa)). A G1 region spans residues 354–361 (GHVDHGKT). 354–361 (GHVDHGKT) provides a ligand contact to GTP. The tract at residues 379–383 (GITQH) is G2. The segment at 400-403 (DTPG) is G3. GTP is bound by residues 400–404 (DTPGH) and 454–457 (NKID). Positions 454–457 (NKID) are G4. Positions 490-492 (SAK) are G5.

The protein belongs to the TRAFAC class translation factor GTPase superfamily. Classic translation factor GTPase family. IF-2 subfamily.

Its subcellular location is the cytoplasm. One of the essential components for the initiation of protein synthesis. Protects formylmethionyl-tRNA from spontaneous hydrolysis and promotes its binding to the 30S ribosomal subunits. Also involved in the hydrolysis of GTP during the formation of the 70S ribosomal complex. The polypeptide is Translation initiation factor IF-2 (Francisella tularensis subsp. tularensis (strain WY96-3418)).